Here is a 534-residue protein sequence, read N- to C-terminus: Light-independent protochlorophyllide reductase subunit B (534 aa).

Asp-36 is a binding site for [4Fe-4S] cluster. The Proton donor role is filled by Asp-274. Residue Gly-409–Leu-410 coordinates substrate. The segment at Asp-426–Asp-446 is disordered.

The protein belongs to the ChlB/BchB/BchZ family. As to quaternary structure, protochlorophyllide reductase is composed of three subunits; BchL, BchN and BchB. Forms a heterotetramer of two BchB and two BchN subunits. [4Fe-4S] cluster serves as cofactor.

The catalysed reaction is chlorophyllide a + oxidized 2[4Fe-4S]-[ferredoxin] + 2 ADP + 2 phosphate = protochlorophyllide a + reduced 2[4Fe-4S]-[ferredoxin] + 2 ATP + 2 H2O. The protein operates within porphyrin-containing compound metabolism; bacteriochlorophyll biosynthesis (light-independent). Its function is as follows. Component of the dark-operative protochlorophyllide reductase (DPOR) that uses Mg-ATP and reduced ferredoxin to reduce ring D of protochlorophyllide (Pchlide) to form chlorophyllide a (Chlide). This reaction is light-independent. The NB-protein (BchN-BchB) is the catalytic component of the complex. This is Light-independent protochlorophyllide reductase subunit B from Cereibacter sphaeroides (strain ATCC 17029 / ATH 2.4.9) (Rhodobacter sphaeroides).